A 342-amino-acid polypeptide reads, in one-letter code: L-threonine 3-dehydrogenase (342 aa).

Cysteine 39 lines the Zn(2+) pocket. Residues threonine 41 and histidine 44 each act as charge relay system in the active site. Zn(2+) contacts are provided by histidine 64, glutamate 65, cysteine 94, cysteine 97, cysteine 100, and cysteine 108. Residues isoleucine 176, aspartate 196, arginine 201, 263-265 (LGI), and 287-288 (IY) contribute to the NAD(+) site.

The protein belongs to the zinc-containing alcohol dehydrogenase family. Homotetramer. Zn(2+) is required as a cofactor.

The protein resides in the cytoplasm. It carries out the reaction L-threonine + NAD(+) = (2S)-2-amino-3-oxobutanoate + NADH + H(+). It participates in amino-acid degradation; L-threonine degradation via oxydo-reductase pathway; glycine from L-threonine: step 1/2. Its function is as follows. Catalyzes the NAD(+)-dependent oxidation of L-threonine to 2-amino-3-ketobutyrate. This chain is L-threonine 3-dehydrogenase, found in Protochlamydia amoebophila (strain UWE25).